Here is a 466-residue protein sequence, read N- to C-terminus: Cocosin 1 (466 aa).

A signal peptide spans 1–22; the sequence is MGSSSLLSFSLCLLLLCHLSQA. Cystine bridges form between C45/C78 and C121/C288. Cupin type-1 domains lie at 50 to 242 and 294 to 443; these read LNAL…ELAR and QNIG…DEAR.

The protein belongs to the 11S seed storage protein (globulins) family. In terms of assembly, hexamer; each subunit is composed of an acidic and a basic chain derived from a single precursor and linked by a disulfide bond. As to expression, endosperm of the seeds.

Its function is as follows. Seed storage protein. The sequence is that of Cocosin 1 from Cocos nucifera (Coconut palm).